The sequence spans 544 residues: Elongator complex protein 3 (544 aa).

The Radical SAM core domain maps to 79–369 (RTASGIAVVA…YRIQRDIPMP (291 aa)). The [4Fe-4S] cluster site is built by Cys-96, Cys-106, and Cys-109. Residues Lys-161, 472 to 475 (ELHV), 495 to 497 (FGT), and Tyr-528 each bind acetyl-CoA. The 152-residue stretch at 393 to 544 (TKCRDIRARE…LDGPYMSKWL (152 aa)) folds into the N-acetyltransferase domain.

The protein belongs to the ELP3 family. As to quaternary structure, component of the elongator complex. It depends on [4Fe-4S] cluster as a cofactor.

It localises to the cytoplasm. It catalyses the reaction uridine(34) in tRNA + acetyl-CoA + S-adenosyl-L-methionine + H2O = 5-(carboxymethyl)uridine(34) in tRNA + 5'-deoxyadenosine + L-methionine + CoA + 2 H(+). Its pathway is tRNA modification; 5-methoxycarbonylmethyl-2-thiouridine-tRNA biosynthesis. In terms of biological role, catalytic tRNA acetyltransferase subunit of the elongator complex which is required for multiple tRNA modifications, including mcm5U (5-methoxycarbonylmethyl uridine), mcm5s2U (5-methoxycarbonylmethyl-2-thiouridine), and ncm5U (5-carbamoylmethyl uridine). In the elongator complex, acts as a tRNA uridine(34) acetyltransferase, which mediates formation of carboxymethyluridine in the wobble base at position 34 in tRNAs. The polypeptide is Elongator complex protein 3 (Schizosaccharomyces pombe (strain 972 / ATCC 24843) (Fission yeast)).